A 219-amino-acid polypeptide reads, in one-letter code: Oligoribonuclease (219 aa).

An Exonuclease domain is found at 30-193 (LVWLDMEMTG…ADIVESIEEL (164 aa)). The active site involves Y151.

The protein belongs to the oligoribonuclease family.

It localises to the cytoplasm. 3'-to-5' exoribonuclease specific for small oligoribonucleotides. The protein is Oligoribonuclease of Ralstonia nicotianae (strain ATCC BAA-1114 / GMI1000) (Ralstonia solanacearum).